A 146-amino-acid chain; its full sequence is Large ribosomal subunit protein uL15 (146 aa).

The disordered stretch occupies residues 1 to 54; sequence MKLHELKPAAGSKKAPKRIGRGTGSGLGRNAGKGEKGQNARSGGGVRPGFEGGQ. Gly residues-rich tracts occupy residues 21 to 31 and 42 to 52; these read RGTGSGLGRNA and SGGGVRPGFEG.

It belongs to the universal ribosomal protein uL15 family. As to quaternary structure, part of the 50S ribosomal subunit.

Its function is as follows. Binds to the 23S rRNA. The protein is Large ribosomal subunit protein uL15 of Clostridium beijerinckii (strain ATCC 51743 / NCIMB 8052) (Clostridium acetobutylicum).